The chain runs to 367 residues: Alanine racemase (367 aa).

K35 (proton acceptor; specific for D-alanine) is an active-site residue. An N6-(pyridoxal phosphate)lysine modification is found at K35. R130 contacts substrate. Y259 acts as the Proton acceptor; specific for L-alanine in catalysis. M307 provides a ligand contact to substrate.

The protein belongs to the alanine racemase family. Pyridoxal 5'-phosphate is required as a cofactor.

It carries out the reaction L-alanine = D-alanine. The protein operates within amino-acid biosynthesis; D-alanine biosynthesis; D-alanine from L-alanine: step 1/1. Catalyzes the interconversion of L-alanine and D-alanine. May also act on other amino acids. In Delftia acidovorans (strain DSM 14801 / SPH-1), this protein is Alanine racemase (alr).